The primary structure comprises 313 residues: Dimethyladenosine transferase (313 aa).

The disordered stretch occupies residues 1–22 (MPKIKSAASGRRRERQQQRGQL). 6 residues coordinate S-adenosyl-L-methionine: histidine 37, leucine 39, glycine 64, glutamate 85, aspartate 113, and asparagine 128.

This sequence belongs to the class I-like SAM-binding methyltransferase superfamily. rRNA adenine N(6)-methyltransferase family. Part of the small subunit (SSU) processome, composed of more than 70 proteins and the RNA chaperone small nucleolar RNA (snoRNA) U3.

The protein localises to the nucleus. It localises to the nucleoplasm. The protein resides in the nucleolus. The enzyme catalyses adenosine(1779)/adenosine(1780) in 18S rRNA + 4 S-adenosyl-L-methionine = N(6)-dimethyladenosine(1779)/N(6)-dimethyladenosine(1780) in 18S rRNA + 4 S-adenosyl-L-homocysteine + 4 H(+). In terms of biological role, specifically dimethylates two adjacent adenosines in the loop of a conserved hairpin near the 3'-end of 18S rRNA in the 40S particle. Involved in the pre-rRNA processing steps leading to small-subunit rRNA production independently of its RNA-modifying catalytic activity. Part of the small subunit (SSU) processome, first precursor of the small eukaryotic ribosomal subunit. During the assembly of the SSU processome in the nucleolus, many ribosome biogenesis factors, an RNA chaperone and ribosomal proteins associate with the nascent pre-rRNA and work in concert to generate RNA folding, modifications, rearrangements and cleavage as well as targeted degradation of pre-ribosomal RNA by the RNA exosome. The chain is Dimethyladenosine transferase (DIMT1) from Bos taurus (Bovine).